A 929-amino-acid polypeptide reads, in one-letter code: von Willebrand factor C and EGF domain-containing protein (929 aa).

Positions 1–21 are cleaved as a signal peptide; it reads MWARLLLHVAYILIPLLGSSA. An EGF-like 1 domain is found at 70-98; it reads LCSFGCGSGICIAPNVCSCQDGEQGATCP. Residues 142 to 180 form the EGF-like 2; calcium-binding domain; the sequence is DIDECLSSSCEGHCVNTEGGFVCECGPGMQLSADRHSCQ. 9 disulfide bridges follow: cysteine 146-cysteine 155, cysteine 151-cysteine 164, cysteine 166-cysteine 179, cysteine 185-cysteine 194, cysteine 190-cysteine 203, cysteine 205-cysteine 218, cysteine 224-cysteine 237, cysteine 233-cysteine 246, and cysteine 248-cysteine 261. An EGF-like 3; calcium-binding domain is found at 181–219; it reads DTDECLGTPCQQRCKNSIGSYKCSCRAGFHLHGNRHSCI. The EGF-like 4; calcium-binding domain occupies 220–262; sequence DVNECRRPQERRVCHHTCHNTVGSFLCTCRPGFRLRSDRVSCE. 2 disordered regions span residues 291–317 and 339–374; these read AGRP…RTIS and PSSS…LGAG. Low complexity predominate over residues 339–353; it reads PSSSPLGTLGPPSLL. VWFC domains follow at residues 376-433, 433-494, 491-552, 558-618, 619-677, and 677-762; these read SSCW…PSCT, TGCF…GRCY, GRCY…FTCR, TGCS…PDCS, AGCT…PVCH, and HDCN…VNCS. N-linked (GlcNAc...) asparagine glycans are attached at residues asparagine 454 and asparagine 464. A disordered region spans residues 731–774; it reads PLEEKQQPSPHGELAKAARNARGDTEVPVNCSSCPGPPSASPTR. Over residues 743-755 the composition is skewed to basic and acidic residues; sequence ELAKAARNARGDT. An N-linked (GlcNAc...) asparagine glycan is attached at asparagine 787. The span at 791 to 807 shows a compositional bias: polar residues; sequence IQSASPSPPIAQTSSSP. Disordered regions lie at residues 791-861 and 879-929; these read IQSA…SSTF and AETP…NSTI. Over residues 889–903 the composition is skewed to low complexity; sequence LSETLTTSSSSQRLS.

It localises to the secreted. In terms of biological role, may be a regulatory element in the beta-catenin signaling pathway and a target for chemoprevention of hapatocellular carcinoma. This Mus musculus (Mouse) protein is von Willebrand factor C and EGF domain-containing protein (Vwce).